A 274-amino-acid polypeptide reads, in one-letter code: Large ribosomal subunit protein uL2 (274 aa).

The tract at residues 224-256 (VMNPVDHPHGGGEGKTGEGRHPVDPWGNLTKGY) is disordered. Basic and acidic residues predominate over residues 229 to 246 (DHPHGGGEGKTGEGRHPV).

This sequence belongs to the universal ribosomal protein uL2 family. In terms of assembly, part of the 50S ribosomal subunit. Forms a bridge to the 30S subunit in the 70S ribosome.

One of the primary rRNA binding proteins. Required for association of the 30S and 50S subunits to form the 70S ribosome, for tRNA binding and peptide bond formation. It has been suggested to have peptidyltransferase activity; this is somewhat controversial. Makes several contacts with the 16S rRNA in the 70S ribosome. The polypeptide is Large ribosomal subunit protein uL2 (Polaromonas naphthalenivorans (strain CJ2)).